Here is a 553-residue protein sequence, read N- to C-terminus: Mucolipin-3 (553 aa).

Topologically, residues 1 to 62 (MANPEVLVSS…FWARGRKPWK (62 aa)) are cytoplasmic. Residues 52 to 62 (KFWARGRKPWK) are interaction with phosphoinositides. The helical transmembrane segment at 63 to 83 (LAIQILKIAMVTIQLVLFGLS) threads the bilayer. The Extracellular portion of the chain corresponds to 84–283 (NQMVVAFKEE…VSGSIQKNTH (200 aa)). Residues 104 to 118 (KGYMDRMDDTYAVYT) are extracellular/lumenal pore loop. N138 is a glycosylation site (N-linked (GlcNAc...) asparagine). The cysteines at positions 159 and 185 are disulfide-linked. N-linked (GlcNAc...) asparagine glycosylation occurs at N205. C238 and C269 are disulfide-bonded. Residues 284–304 (YMMIFDAFVILTCLASLVLCA) traverse the membrane as a helical segment. The Cytoplasmic segment spans residues 305-341 (RSVIRGLQLQQEFVNFFLLHYKKEVSASDQMEFINGW). A helical membrane pass occupies residues 342-362 (YIMIIISDILTIVGSVLKMEI). Residues 363 to 371 (QAKSLTSYD) lie on the Extracellular side of the membrane. A helical transmembrane segment spans residues 372–392 (VCSILLGTSTMLVWLGVIRYL). At 393–414 (GFFAKYNLLILTLQAALPNVMR) the chain is on the cytoplasmic side. The helical transmembrane segment at 415-435 (FCCCAAMIYLGYCFCGWIVLG) threads the bilayer. Residues 436–443 (PYHEKFRS) lie on the Extracellular side of the membrane. An intramembrane region (pore-forming) is located at residues 444 to 464 (LNRVSECLFSLINGDDMFSTF). The Selectivity filter motif lies at 456–459 (NGDD). Residues 465 to 475 (AKMQQKSYLVW) lie on the Extracellular side of the membrane. The chain crosses the membrane as a helical span at residues 476-497 (LFSRVYLYSFISLFIYMILSLF). The Cytoplasmic portion of the chain corresponds to 498–553 (IALITDTYETIKHYQQDGFPETELRKFIAECKDLPNSGKYRLEDDPPGSLLCCCKK).

Belongs to the transient receptor (TC 1.A.4) family. Polycystin subfamily. MCOLN3 sub-subfamily. In terms of assembly, homotetramer. Can heterooligomerize with MCOLN1; heteromeric assemblies have different channel properties as compared to the respective homooligomers and may be tissue-specific. May heterooligomerize with TRPV5 to form a functional distinct ion channel. Interacts with GABARAPL2. Post-translationally, N-glycosylated. As to expression, expressed in the cochlea; particularly in the inner and outer hair cells (at protein level).

Its subcellular location is the early endosome membrane. The protein resides in the late endosome membrane. The protein localises to the cytoplasmic vesicle. It is found in the autophagosome membrane. It localises to the cell projection. Its subcellular location is the stereocilium membrane. It carries out the reaction Ca(2+)(in) = Ca(2+)(out). The catalysed reaction is Mg(2+)(in) = Mg(2+)(out). It catalyses the reaction K(+)(in) = K(+)(out). The enzyme catalyses Na(+)(in) = Na(+)(out). Channel activity is activated by PtdIns(3,5)P2 (phosphatidylinositol 3,5-bisphosphate). Inhibited by lumenal H(+) and Na(+). The channel pore shows dynamic behavior and undergoes spontaneous, Ca(2+)-dependent modulation when conducting Ca(2+). Functionally, nonselective cation channel probably playing a role in the regulation of membrane trafficking events. Acts as a Ca(2+)-permeable cation channel with inwardly rectifying activity. Mediates release of Ca(2+) from endosomes to the cytoplasm, contributes to endosomal acidification and is involved in the regulation of membrane trafficking and fusion in the endosomal pathway. Also permeable to Mg(2+), Na(+) and K(+). Does not seem to act as mechanosensory transduction channel in inner ear sensory hair cells. Proposed to play a critical role at the cochlear stereocilia ankle-link region during hair-bundle growth. Involved in the regulation of autophagy. Through association with GABARAPL2 may be involved in autophagosome formation possibly providing Ca(2+) for the fusion process. Through a possible and probably tissue-specific heteromerization with MCOLN1 may be at least in part involved in many lysosome-dependent cellular events. Possible heteromeric ion channel assemblies with TRPV5 show pharmacological similarity with TRPML3. The sequence is that of Mucolipin-3 (Mcoln3) from Mus musculus (Mouse).